We begin with the raw amino-acid sequence, 271 residues long: Elongation factor Ts (271 aa).

Residues 76–79 form an involved in Mg(2+) ion dislocation from EF-Tu region; sequence TDFV.

This sequence belongs to the EF-Ts family.

Its subcellular location is the cytoplasm. Functionally, associates with the EF-Tu.GDP complex and induces the exchange of GDP to GTP. It remains bound to the aminoacyl-tRNA.EF-Tu.GTP complex up to the GTP hydrolysis stage on the ribosome. This chain is Elongation factor Ts, found in Saccharopolyspora erythraea (strain ATCC 11635 / DSM 40517 / JCM 4748 / NBRC 13426 / NCIMB 8594 / NRRL 2338).